The primary structure comprises 576 residues: 2-succinyl-5-enolpyruvyl-6-hydroxy-3-cyclohexene-1-carboxylate synthase (576 aa).

Belongs to the TPP enzyme family. MenD subfamily. In terms of assembly, homodimer. Mg(2+) is required as a cofactor. The cofactor is Mn(2+). It depends on thiamine diphosphate as a cofactor.

It carries out the reaction isochorismate + 2-oxoglutarate + H(+) = 5-enolpyruvoyl-6-hydroxy-2-succinyl-cyclohex-3-ene-1-carboxylate + CO2. It functions in the pathway quinol/quinone metabolism; 1,4-dihydroxy-2-naphthoate biosynthesis; 1,4-dihydroxy-2-naphthoate from chorismate: step 2/7. The protein operates within quinol/quinone metabolism; menaquinone biosynthesis. Its function is as follows. Catalyzes the thiamine diphosphate-dependent decarboxylation of 2-oxoglutarate and the subsequent addition of the resulting succinic semialdehyde-thiamine pyrophosphate anion to isochorismate to yield 2-succinyl-5-enolpyruvyl-6-hydroxy-3-cyclohexene-1-carboxylate (SEPHCHC). This is 2-succinyl-5-enolpyruvyl-6-hydroxy-3-cyclohexene-1-carboxylate synthase from Aliivibrio fischeri (strain ATCC 700601 / ES114) (Vibrio fischeri).